A 239-amino-acid chain; its full sequence is Probable 2-phosphosulfolactate phosphatase (239 aa).

This sequence belongs to the ComB family. Mg(2+) is required as a cofactor.

It carries out the reaction (2R)-O-phospho-3-sulfolactate + H2O = (2R)-3-sulfolactate + phosphate. In Clostridium botulinum (strain 657 / Type Ba4), this protein is Probable 2-phosphosulfolactate phosphatase.